Reading from the N-terminus, the 335-residue chain is Acyl-CoA Delta(11) desaturase (335 aa).

3 helical membrane passes run 39–59 (LLTFGYWHIAGLYGLYLCFTS), 64–84 (TIILALILNEMAILGITAGAH), and 98–118 (LQIILIIFNSLSFQNSAIHWI). The short motif at 84–89 (HRLWAH) is the Histidine box-1 element. The Histidine box-2 signature appears at 121–125 (HRMHH). 2 helical membrane passes run 182–202 (AIPFIGMICFVLPTIIPMYFW) and 213–235 (TMLRYVFSLNSIFLVNSAAHLYG). The short motif at 261–265 (HNYHH) is the Histidine box-3 element. The tract at residues 312 to 335 (MKRTGDGTDVSGQKYSCESSEVLQ) is disordered. Positions 321–335 (VSGQKYSCESSEVLQ) are enriched in polar residues.

The protein belongs to the fatty acid desaturase type 1 family. Fe cation is required as a cofactor. In terms of tissue distribution, detected in pheromone gland.

It is found in the membrane. It carries out the reaction an 11,12-saturated fatty acyl-CoA + 2 Fe(II)-[cytochrome b5] + O2 + 2 H(+) = an (11Z)-Delta(11)-fatty acyl-CoA + 2 Fe(III)-[cytochrome b5] + 2 H2O. Catalyzes the formation of Delta(11) fatty acyl precursors in the pheromone gland, with a preference for myristic acid. The sequence is that of Acyl-CoA Delta(11) desaturase from Choristoneura rosaceana (Oblique banded leafroller).